The chain runs to 485 residues: Efflux pump bik6 (485 aa).

Transmembrane regions (helical) follow at residues Val42–Tyr62, Leu86–Gly106, Lys108–Ala128, Phe139–Ile159, Tyr172–Ala192, and Trp199–Leu219. N-linked (GlcNAc...) asparagine glycosylation occurs at Asn241. A run of 6 helical transmembrane segments spans residues Met269 to Leu289, Trp306 to Ala326, Leu353 to Thr373, Ser379 to Phe399, Ala417 to Trp437, and Trp447 to Phe467.

This sequence belongs to the major facilitator superfamily.

The protein resides in the membrane. Functionally, efflux pump; part of the gene cluster that mediates the biosynthesis of bikaverin, a red pigment also considered as a mycotoxin. The polypeptide is Efflux pump bik6 (Gibberella fujikuroi (strain CBS 195.34 / IMI 58289 / NRRL A-6831) (Bakanae and foot rot disease fungus)).